The sequence spans 137 residues: Protein Flattop homolog (137 aa).

This sequence belongs to the Flattop family.

It localises to the cytoplasm. The protein resides in the cytoskeleton. It is found in the flagellum axoneme. Functionally, microtubule inner protein (MIP) part of the dynein-decorated doublet microtubules (DMTs) in cilia axoneme. Acts as a regulator of cilium basal body docking and positioning in mono- and multiciliated cells. Regulates basal body docking and cilia formation in multiciliated lung cells. Regulates kinocilium positioning and stereocilia bundle morphogenesis in the inner ear. The polypeptide is Protein Flattop homolog (Chlamydomonas reinhardtii (Chlamydomonas smithii)).